A 211-amino-acid chain; its full sequence is Proteasome subunit beta (211 aa).

A propeptide spans 1–8 (MNQTLETG) (removed in mature form; by autocatalysis). The Nucleophile role is filled by threonine 9.

This sequence belongs to the peptidase T1B family. The 20S proteasome core is composed of 14 alpha and 14 beta subunits that assemble into four stacked heptameric rings, resulting in a barrel-shaped structure. The two inner rings, each composed of seven catalytic beta subunits, are sandwiched by two outer rings, each composed of seven alpha subunits. The catalytic chamber with the active sites is on the inside of the barrel. Has a gated structure, the ends of the cylinder being occluded by the N-termini of the alpha-subunits. Is capped at one or both ends by the proteasome regulatory ATPase, PAN.

It is found in the cytoplasm. The enzyme catalyses Cleavage of peptide bonds with very broad specificity.. Its activity is regulated as follows. The formation of the proteasomal ATPase PAN-20S proteasome complex, via the docking of the C-termini of PAN into the intersubunit pockets in the alpha-rings, triggers opening of the gate for substrate entry. Interconversion between the open-gate and close-gate conformations leads to a dynamic regulation of the 20S proteasome proteolysis activity. Functionally, component of the proteasome core, a large protease complex with broad specificity involved in protein degradation. The T.acidophilum proteasome is able to cleave oligopeptides after Tyr, Leu, Phe, and to a lesser extent after Glu and Arg. Thus, displays chymotrypsin-like activity and low level of caspase-like and trypsin-like activities. In Thermoplasma acidophilum (strain ATCC 25905 / DSM 1728 / JCM 9062 / NBRC 15155 / AMRC-C165), this protein is Proteasome subunit beta.